Here is a 131-residue protein sequence, read N- to C-terminus: Ribonuclease P protein component (131 aa).

This sequence belongs to the RnpA family. As to quaternary structure, consists of a catalytic RNA component (M1 or rnpB) and a protein subunit.

It carries out the reaction Endonucleolytic cleavage of RNA, removing 5'-extranucleotides from tRNA precursor.. Functionally, RNaseP catalyzes the removal of the 5'-leader sequence from pre-tRNA to produce the mature 5'-terminus. It can also cleave other RNA substrates such as 4.5S RNA. The protein component plays an auxiliary but essential role in vivo by binding to the 5'-leader sequence and broadening the substrate specificity of the ribozyme. This Stutzerimonas stutzeri (strain A1501) (Pseudomonas stutzeri) protein is Ribonuclease P protein component.